Here is a 759-residue protein sequence, read N- to C-terminus: MRYNQYSYTKASEEVMLDELARLGFTIQTTNSPKENLHHFLQKILFRYQDVNYVLSSWVADQKTDLLTFFQSDKQLTEEVFYTVALQVLGFAPFVDFDDVTAFCKEIHFPITYGNILENLYQLLNTRTKLGNTLIDQLVSEGFIPESNDYHFFNGKSLATFSSHEAIREVVYVESRVDTDGDGKPDLVKVSIIRPSYEGQVPAVMTASPYHQGTNDKASDKALHNMNVDLSCKNPRTITVQESSIQTIEPQGQASLVEKAEEKLGHIGSYTLNDYLLPRGFANLYVSGVGTKDSEGMMTSGDYQQIEAYKNVIDWLNGRCRAFTDHTRQREIKATWSNGKVATTGISYLGTMSNGLATTGVDGLEVIIAEAGISSWYNYYRENGLVTSPGGYPGEDFESLTELTYSRNLLAGEYLRHNQAYQAYLDQQRKDLERETGDYNQFWHDRNYLIHADKVKAEVVFTHGSQDWNVKPLHVYNMFHALPAHIKKHLFFHNGAHVYINNWQSIDFRESMNALLSKKLLGHSSDFDLPPVIWQDNSQAQNWMSLDDFGNQEDYSHFHLGKGSQEIRNRYSDEDYNRFAKSYQVFKNELFEGKTQQITLDWTLEQDLFINGPAKLKLRLKSSTNKGLISAQLLDYWPAKRLTPIPSLLEPRVMDNGRYYMLDNLMELPFADTPHRVITKGFLNLQNRTDLLTVEEVVPNQWMELSFELQPTIYKLKKGDQLRLVLYTTDFEHTVRDKTDYHLSVDMEHSSLSLPHKKS.

Catalysis depends on charge relay system residues serine 347, aspartate 467, and histidine 497.

Belongs to the peptidase S15 family. As to quaternary structure, homodimer.

Its subcellular location is the cytoplasm. The catalysed reaction is Hydrolyzes Xaa-Pro-|- bonds to release unblocked, N-terminal dipeptides from substrates including Ala-Pro-|-p-nitroanilide and (sequentially) Tyr-Pro-|-Phe-Pro-|-Gly-Pro-|-Ile.. Functionally, removes N-terminal dipeptides sequentially from polypeptides having unsubstituted N-termini provided that the penultimate residue is proline. This is Xaa-Pro dipeptidyl-peptidase from Streptococcus gordonii (strain Challis / ATCC 35105 / BCRC 15272 / CH1 / DL1 / V288).